A 315-amino-acid chain; its full sequence is Homoserine kinase (315 aa).

97-107 (PPARGLGSSAT) is an ATP binding site.

The protein belongs to the GHMP kinase family. Homoserine kinase subfamily.

Its subcellular location is the cytoplasm. It catalyses the reaction L-homoserine + ATP = O-phospho-L-homoserine + ADP + H(+). It functions in the pathway amino-acid biosynthesis; L-threonine biosynthesis; L-threonine from L-aspartate: step 4/5. Its function is as follows. Catalyzes the ATP-dependent phosphorylation of L-homoserine to L-homoserine phosphate. This chain is Homoserine kinase, found in Synechococcus sp. (strain CC9902).